A 99-amino-acid chain; its full sequence is MTAKDKEALELRAQIQQHLVESGNYERISNKLAQRLLDEGWIDQVKKLTRETMEDDNTTNFSEVLKRVEPEAVSLVSANTKNEIMQQIKAFLCDILDTQ.

This sequence belongs to the ENY2 family. Component of the nuclear pore complex (NPC)-associated TREX-2 complex (transcription and export complex 2), composed of at least SUS1, SAC3, THP1, SEM1, and CDC31. TREX-2 contains 2 SUS1 chains. The TREX-2 complex interacts with the nucleoporin NUP1. Component of the 1.8 MDa SAGA transcription coactivator-HAT complex. SAGA is built of 5 distinct domains with specialized functions. Within the SAGA complex, SUS1, SGF11, SGF73 and UBP8 form an additional subcomplex of SAGA called the DUB module (deubiquitination module). Interacts directly with THP1, SAC3, SGF11, and with the RNA polymerase II.

It is found in the nucleus. The protein localises to the nucleoplasm. It localises to the cytoplasm. The protein resides in the P-body. In terms of biological role, involved in mRNA export coupled transcription activation by association with both the TREX-2 and the SAGA complexes. At the promoters, SAGA is required for recruitment of the basal transcription machinery. It influences RNA polymerase II transcriptional activity through different activities such as TBP interaction and promoter selectivity, interaction with transcription activators, and chromatin modification through histone acetylation and deubiquitination. Within the SAGA complex, participates in a subcomplex required for deubiquitination of H2B and for the maintenance of steady-state H3 methylation levels. The TREX-2 complex functions in docking export-competent ribonucleoprotein particles (mRNPs) to the nuclear entrance of the nuclear pore complex (nuclear basket). TREX-2 participates in mRNA export and accurate chromatin positioning in the nucleus by tethering genes to the nuclear periphery. May also be involved in cytoplasmic mRNA decay by interaction with components of P-bodies. The sequence is that of Transcription and mRNA export factor SUS1 from Eremothecium gossypii (strain ATCC 10895 / CBS 109.51 / FGSC 9923 / NRRL Y-1056) (Yeast).